A 121-amino-acid polypeptide reads, in one-letter code: Large ribosomal subunit protein bL19 (121 aa).

Belongs to the bacterial ribosomal protein bL19 family.

Functionally, this protein is located at the 30S-50S ribosomal subunit interface and may play a role in the structure and function of the aminoacyl-tRNA binding site. In Chloroherpeton thalassium (strain ATCC 35110 / GB-78), this protein is Large ribosomal subunit protein bL19.